A 55-amino-acid chain; its full sequence is Major pollen allergen Dac g 4 (55 aa).

This Dactylis glomerata (Orchard grass) protein is Major pollen allergen Dac g 4.